Here is a 219-residue protein sequence, read N- to C-terminus: Guanylate kinase (219 aa).

Residues 15–194 (GLMLVISSPS…AFSSVRAIVE (180 aa)) form the Guanylate kinase-like domain. 22–29 (SPSGAGKS) contacts ATP.

This sequence belongs to the guanylate kinase family.

Its subcellular location is the cytoplasm. It carries out the reaction GMP + ATP = GDP + ADP. Essential for recycling GMP and indirectly, cGMP. This chain is Guanylate kinase, found in Rhizobium meliloti (strain 1021) (Ensifer meliloti).